The sequence spans 172 residues: WW domain binding protein VOPP1 (172 aa).

Residues 1–22 (MRRQPAKVAALLLGLLLECTEA) form the signal peptide. The Extracellular portion of the chain corresponds to 23 to 60 (KKHCWYFEGLYPTYYICRSYEDCCGSRCCVRALSIQRL). The chain crosses the membrane as a helical span at residues 61–81 (WYFWFLLMMGVLFCCGAGFFI). The Cytoplasmic portion of the chain corresponds to 82 to 172 (RRRMYPPPLI…PPYEQVVKAK (91 aa)). A disordered region spans residues 102 to 153 (RQPPNPGPGAQQPGPPYYTDPGGPGMNPVGNSMAMAFQVPPNSPQGSVACPP). A compositionally biased stretch (pro residues) spans 104–119 (PPNPGPGAQQPGPPYY).

This sequence belongs to the VOPP1/ECOP family. In terms of assembly, interacts with WWOX (via WW domain). Widely expressed with highest levels in thymus and ovary.

It is found in the cytoplasmic vesicle membrane. It localises to the late endosome membrane. The protein resides in the lysosome membrane. In terms of biological role, increases the transcriptional activity of NFKB1 by facilitating its nuclear translocation, DNA-binding and associated apoptotic response, when overexpressed. May sequester WWOX in lysosomal vesicles and thereby regulate WWOX role as tumor suppressor. The sequence is that of WW domain binding protein VOPP1 from Homo sapiens (Human).